A 111-amino-acid polypeptide reads, in one-letter code: Inner membrane protein YdgC (111 aa).

The Cytoplasmic segment spans residues Met1–Tyr26. Residues Tyr27–Ala47 traverse the membrane as a helical segment. Topologically, residues Ser48–Thr58 are periplasmic. The chain crosses the membrane as a helical span at residues Ile59 to Phe79. Topologically, residues Thr80–Ala87 are cytoplasmic. The helical transmembrane segment at Ala88–Ile108 threads the bilayer. Residues Lys109–His111 are Periplasmic-facing.

The protein to P.aeruginosa GlpM.

The protein resides in the cell inner membrane. This is Inner membrane protein YdgC (ydgC) from Escherichia coli O157:H7.